Here is a 225-residue protein sequence, read N- to C-terminus: MKQYLIAPSILSADFARLGEDTAKALAAGADVVHFDVMDNHYVPNLTIGPMVLKSLRNYGITAPIDVHLMVKPVDRIVPDFAAAGASIITFHPEASEHVDRTLQLIKENGCKAGLVFNPATPLSYLDYVMDKLDVILLMSVNPGFGGQSFIPQTLDKLREVRRRIDESGFDIRLEVDGGVKVNNIGEIAAAGADMFVAGSAIFDQPDYKKVIDEMRSELAKVSHE.

Ser-9 contacts substrate. A divalent metal cation is bound by residues His-34, Asp-36, and His-68. Asp-36 acts as the Proton acceptor in catalysis. Residues His-68, Gly-144–Gly-147, Asp-177–Gly-179, and Gly-199–Ser-200 each bind substrate. Asp-177 lines the a divalent metal cation pocket. Asp-177 acts as the Proton donor in catalysis.

This sequence belongs to the ribulose-phosphate 3-epimerase family. It depends on a divalent metal cation as a cofactor.

It catalyses the reaction D-ribulose 5-phosphate = D-xylulose 5-phosphate. It participates in carbohydrate degradation. Functionally, catalyzes the reversible epimerization of D-ribulose 5-phosphate to D-xylulose 5-phosphate. This Escherichia coli O157:H7 protein is Ribulose-phosphate 3-epimerase.